The sequence spans 745 residues: 1,4-alpha-glucan branching enzyme GlgB (745 aa).

D416 serves as the catalytic Nucleophile. Residue E469 is the Proton donor of the active site.

It belongs to the glycosyl hydrolase 13 family. GlgB subfamily. As to quaternary structure, monomer.

It catalyses the reaction Transfers a segment of a (1-&gt;4)-alpha-D-glucan chain to a primary hydroxy group in a similar glucan chain.. It participates in glycan biosynthesis; glycogen biosynthesis. Catalyzes the formation of the alpha-1,6-glucosidic linkages in glycogen by scission of a 1,4-alpha-linked oligosaccharide from growing alpha-1,4-glucan chains and the subsequent attachment of the oligosaccharide to the alpha-1,6 position. The chain is 1,4-alpha-glucan branching enzyme GlgB from Shewanella sp. (strain MR-7).